We begin with the raw amino-acid sequence, 247 residues long: STING ER exit protein (247 aa).

Residue serine 127 is modified to Phosphoserine. A coiled-coil region spans residues glutamate 195 to arginine 216. The disordered stretch occupies residues glutamine 215 to arginine 247.

The protein belongs to the STEEP1 family.

In terms of biological role, molecular adapter that stimulates membrane curvature formation and subsequent endoplasmic reticulum exit site (ERES) establishment by recruiting PI3K complex I, leading to COPII vesicle-mediated transport. The chain is STING ER exit protein from Drosophila melanogaster (Fruit fly).